A 335-amino-acid chain; its full sequence is Nuclear distribution protein nudE homolog 1 (335 aa).

Positions 1–93 (MEDSGKTFSS…VQHSEGYRQI (93 aa)) are self-association. Residues 18 to 188 (WKDLAMTYKQ…ELAVQQKQEK (171 aa)) adopt a coiled-coil conformation. The tract at residues 88 to 156 (EGYRQISALE…ERNAFLESEL (69 aa)) is interaction with PAFAH1B1. An interaction with CENPF region spans residues 167–290 (QRLKDEARDL…QSPNRTGGPA (124 aa)). Residues 181–246 (AVQQKQEKPR…DDSTGGTPLT (66 aa)) form a disordered region. Over residues 204–214 (TAVQATGSVPS) the composition is skewed to polar residues. Serine 211 carries the phosphoserine modification. Residues threonine 215 and threonine 228 each carry the phosphothreonine modification. 2 positions are modified to phosphoserine: serine 231 and serine 239. Phosphothreonine is present on residues threonine 243 and threonine 246. A lipid anchor (S-palmitoyl cysteine; by ZDHHC2, ZDHHC3 and ZDHHC7) is attached at cysteine 274. Residues 279-335 (YDQSPNRTGGPASGRSSKNRDGGERRPSSTSVPLGDKGLDTSCRWLSKSTTRSSSSC) are disordered. Phosphoserine is present on serine 282. Residues 296 to 305 (KNRDGGERRP) show a composition bias toward basic and acidic residues. A Phosphoserine modification is found at serine 309. Positions 325–335 (SKSTTRSSSSC) are enriched in low complexity.

It belongs to the nudE family. As to quaternary structure, homodimer. Interacts with CNTRL, LIS1, dynein, SLMAP and TCP1. Interacts with CENPF, dynactin, tubulin gamma, PAFAH1B1, PCM1 and PCNT. Interacts with ZNF365. Interacts with GTP-bound RAB9A and RAB9B; the interaction leads to RAB9-dynein motor tethering. Interacts (via C-terminus) with MCRS1 (via C-terminus); phosphorylation of NDE1 inhibits the interaction. Phosphorylated in mitosis. Phosphorylated in vitro by CDC2. Phosphorylation at Thr-246 is essential for the G2/M transition. In terms of tissue distribution, expressed in the neuroepithelium throughout the developing brain, including the cerebral cortex and cerebellum.

The protein resides in the cytoplasm. The protein localises to the cytoskeleton. Its subcellular location is the microtubule organizing center. It localises to the centrosome. It is found in the chromosome. The protein resides in the centromere. The protein localises to the kinetochore. Its subcellular location is the spindle. It localises to the cleavage furrow. It is found in the cytoplasmic vesicle membrane. Functionally, required for centrosome duplication and formation and function of the mitotic spindle. Essential for the development of the cerebral cortex. May regulate the production of neurons by controlling the orientation of the mitotic spindle during division of cortical neuronal progenitors of the proliferative ventricular zone of the brain. Orientation of the division plane perpendicular to the layers of the cortex gives rise to two proliferative neuronal progenitors whereas parallel orientation of the division plane yields one proliferative neuronal progenitor and a postmitotic neuron. A premature shift towards a neuronal fate within the progenitor population may result in an overall reduction in the final number of neurons and an increase in the number of neurons in the deeper layers of the cortex. Acts as a RAB9A/B effector that tethers RAB9-associated late endosomes to the dynein motor for their retrograde transport to the trans-Golgi network. The sequence is that of Nuclear distribution protein nudE homolog 1 from Homo sapiens (Human).